Consider the following 330-residue polypeptide: MFNALVVDKDEESGKTQAAVKQLSLTDLPVGEVTVAVEYSTVNYKDGLCIGPGGGLVRKYPHVPGIDFAGTVENSSDERYKPGDKVVLTGWRVGEAHWGGYSQKANVRADWLVPLPEGLDTRQAMAVGTAGFTAMLAVMALEDHGLTPGHGPVLVTGAAGGVGSVATAILAHLGYEVAAVTGRPETADYLTSLGATQIVARDEINETVKRPLESEIWAGCVDAVGGAMLARVLGQMKYGASVAAVGLAGGAGLPATVIPFLLRGVNLLGIDSVMQPYANRLRAWERIARDLPMDKLEAMIRPATLSDLPGLGADILKGQVQGRVVVDVNA.

NADP(+) contacts are provided by residues Y44, 159 to 162 (AGGV), 181 to 183 (TGR), R201, L247, and S272.

This sequence belongs to the zinc-containing alcohol dehydrogenase family. Acrylyl-CoA reductase subfamily. Homodimer.

Its subcellular location is the cytoplasm. It catalyses the reaction propanoyl-CoA + NADP(+) = acryloyl-CoA + NADPH + H(+). Functionally, probably catalyzes the NADPH-dependent reduction of acrylyl-CoA to propanoyl-CoA. Restores acrylate resistance when expressed in an E.coli strain K12 acuI deletion. This chain is Acrylyl-CoA reductase AcuI (acuI), found in Ruegeria pomeroyi (strain ATCC 700808 / DSM 15171 / DSS-3) (Silicibacter pomeroyi).